The sequence spans 1160 residues: Transcription factor tau 138 kDa subunit (1160 aa).

Residues 475 to 533 (PNSKKTPNKNKRKRQVKNSTNASVAGNISNPKRIKLEQHVSTAQEPKSAEDSPSSNGGT) are disordered. The segment covering 480–490 (TPNKNKRKRQV) has biased composition (basic residues). Composition is skewed to polar residues over residues 491 to 504 (KNST…NISN) and 513 to 529 (HVST…SPSS). Ser546 carries the phosphoserine modification.

As to quaternary structure, component of the TFIIIC complex composed of TFC1, TFC3, TFC4, TFC6, TFC7 and TFC8. The subunits are organized in two globular domains, tauA and tauB, connected by a proteolysis-sensitive and flexible linker. Interacts with TFC1, TFC4 and TFC6.

It localises to the nucleus. Its subcellular location is the mitochondrion. In terms of biological role, TFIIIC mediates tRNA and 5S RNA gene activation by binding to intragenic promoter elements. Upstream of the transcription start site, TFIIIC assembles the initiation complex TFIIIB-TFIIIC-tDNA, which is sufficient for RNA polymerase III recruitment and function. Part of the tauB domain of TFIIIC that binds boxB DNA promoter sites of tRNA and similar genes. TFC3 is essential for cell viability. Cooperates with TFC6 in DNA binding. In Saccharomyces cerevisiae (strain ATCC 204508 / S288c) (Baker's yeast), this protein is Transcription factor tau 138 kDa subunit (TFC3).